A 367-amino-acid polypeptide reads, in one-letter code: Undecaprenyl-phosphate alpha-N-acetylglucosaminyl 1-phosphate transferase (367 aa).

10 helical membrane passes run 3-23 (LLTVSTDLISIFLFTTLFLFF), 46-66 (LIPLVGGISVYAGICFTFGIV), 69-89 (YIPHASLYLACAGVLVFIGAL), 132-152 (VLGPFGYFLTLFAVWAAINAF), 158-178 (IDGLLGGLSCVSFAAIGMILW), 187-207 (IWCFAMIAAILPYIMLNLGIL), 213-233 (VFMGDAGSTLIGFTVIWILLE), 242-262 (ISPVTALWIIAIPLMDMVAIM), 294-314 (AFVLITLAAALLASIGVLAEY), and 318-338 (VPEWVMLVLFLLAFLLYGYCI).

This sequence belongs to the glycosyltransferase 4 family. WecA subfamily. Mg(2+) is required as a cofactor. Mn(2+) serves as cofactor.

It is found in the cell inner membrane. The enzyme catalyses di-trans,octa-cis-undecaprenyl phosphate + UDP-N-acetyl-alpha-D-glucosamine = N-acetyl-alpha-D-glucosaminyl-di-trans,octa-cis-undecaprenyl diphosphate + UMP. The protein operates within bacterial outer membrane biogenesis; LPS O-antigen biosynthesis. Its pathway is bacterial outer membrane biogenesis; enterobacterial common antigen biosynthesis. Functionally, catalyzes the transfer of the GlcNAc-1-phosphate moiety from UDP-GlcNAc onto the carrier lipid undecaprenyl phosphate (C55-P), yielding GlcNAc-pyrophosphoryl-undecaprenyl (GlcNAc-PP-C55). The protein is Undecaprenyl-phosphate alpha-N-acetylglucosaminyl 1-phosphate transferase of Escherichia coli O157:H7.